The sequence spans 87 residues: MRSLRLRTVVVATIVVCLSVLLSPTEVDGSCDFPLGACTPFRDCKESCIKFKTRAGQTFFDGKCRPRDRPSVWTACFCCYYDSIGAQ.

An N-terminal signal peptide occupies residues 1–29 (MRSLRLRTVVVATIVVCLSVLLSPTEVDG). Disulfide bonds link Cys-31-Cys-79, Cys-38-Cys-64, Cys-44-Cys-76, and Cys-48-Cys-78.

Belongs to the DEFL family.

It localises to the secreted. The polypeptide is Defensin-like protein 100 (Arabidopsis thaliana (Mouse-ear cress)).